The sequence spans 210 residues: Insulin receptor (210 aa).

Residues 1–96 form the Fibronectin type-III domain; it reads VSNSSSQIIL…SQILKELEES (96 aa). Asn3, Asn21, and Asn68 each carry an N-linked (GlcNAc...) asparagine glycan. Positions 55-78 are disordered; the sequence is WSPPFESEDSQKHNQSEYEDSAGE. The interval 103–111 is insulin-binding; that stretch reads EDYLHNVVF. A disordered region spans residues 116–169; that stretch reads TSSGTGAEDPRPSRKRRSLGDVGNVTVAVPTVAAFPNTSSTSTPTSPEEHRPFE. At 133–210 the chain is on the extracellular side; the sequence is SLGDVGNVTV…EERCSVAAYV (78 aa). The span at 137 to 161 shows a compositional bias: low complexity; that stretch reads VGNVTVAVPTVAAFPNTSSTSTPTS. N-linked (GlcNAc...) asparagine glycans are attached at residues Asn139 and Asn152. Cys195 and Cys204 are oxidised to a cystine.

It belongs to the protein kinase superfamily. Tyr protein kinase family. Insulin receptor subfamily. Tetramer of 2 alpha and 2 beta chains linked by disulfide bonds. The alpha chains carry the insulin-binding regions, while the beta chains carry the kinase domain. Forms a hybrid receptor with IGF1R, the hybrid is a tetramer consisting of 1 alpha chain and 1 beta chain of INSR and 1 alpha chain and 1 beta chain of IGF1R. Interacts with SORBS1 but dissociates from it following insulin stimulation. Binds SH2B2. Activated form of INSR interacts (via phosphorylated Tyrosine) with the PTB/PID domains of IRS1 and SHC1. The sequences surrounding the phosphorylated NPXY motif contribute differentially to either IRS1 or SHC1 recognition. Interacts (via tyrosines in the C-terminus) with IRS2 (via PTB domain and 591-786 AA); the 591-786 would be the primary anchor of IRS2 to INSR while the PTB domain would have a stabilizing action on the interaction with INSR. Interacts with the SH2 domains of the 85 kDa regulatory subunit of PI3K (PIK3R1) in vitro, when autophosphorylated on tyrosine residues. Interacts with SOCS7. Interacts with SOCS3. Interacts with SOCS1. Interacts with CAV2 (tyrosine-phosphorylated form); the interaction is increased with 'Tyr-27'phosphorylation of CAV2. Interacts with ARRB2. Interacts with GRB10; this interaction blocks the association between IRS1/IRS2 and INSR, significantly reduces insulin-stimulated tyrosine phosphorylation of IRS1 and IRS2 and thus decreases insulin signaling. Interacts with GRB7. Interacts with PDPK1. Interacts with GRB14 (via BPS domain). Interacts (via subunit alpha) with ENPP1 (via 485-599 AA); this interaction blocks autophosphorylation. Interacts with PTPRE. Interacts with STAT5B (via SH2 domain). Interacts with PTPRF. Interacts with ATIC; ATIC together with PRKAA2/AMPK2 and HACD3/PTPLAD1 is proposed to be part of a signaling netwok regulating INSR autophosphorylation and endocytosis. Interacts with the insulin receptor SORL1; this interaction strongly increases its surface exposure, hence strengthens insulin signal reception. Interacts (tyrosine phosphorylated) with CCDC88A/GIV (via SH2-like region); binding requires autophosphorylation of the INSR C-terminal region. Interacts with GNAI3; the interaction is probably mediated by CCDC88A/GIV. Interacts with LMBRD1. Interacts (in response to insulin stimulation) with NCK1; this interaction may recruit PTPN1 to mediate INSR dephosphorylation. In terms of processing, after being transported from the endoplasmic reticulum to the Golgi apparatus, the single glycosylated precursor is further glycosylated and then cleaved, followed by its transport to the plasma membrane. Autophosphorylated on tyrosine residues in response to insulin. Dephosphorylated by PTPN1, PTPRE and PTPRF. Dephosphorylated by PTPN2; down-regulates insulin-induced signaling. Post-translationally, S-nitrosylation by BLVRB inhibits the receptor tyrosine kinase, thereby inhibiting insulin signaling.

Its subcellular location is the cell membrane. It localises to the late endosome. It is found in the lysosome. It carries out the reaction L-tyrosyl-[protein] + ATP = O-phospho-L-tyrosyl-[protein] + ADP + H(+). With respect to regulation, activated in response to insulin. Autophosphorylation activates the kinase activity. PTPN1, PTPRE and PTPRF dephosphorylate important tyrosine residues, thereby reducing INSR activity. Inhibited by ENPP1. GRB10 and GRB14 inhibit the catalytic activity of the INSR, they block access of substrates to the activated receptor. SOCS1 and SOCS3 act as negative regulators of INSR activity, they bind to the activated INRS and interfere with the phosphorylation of INSR substrates. In terms of biological role, receptor tyrosine kinase which mediates the pleiotropic actions of insulin. Binding of insulin leads to phosphorylation of several intracellular substrates, including, insulin receptor substrates (IRS1, 2, 3, 4), SHC, GAB1, CBL and other signaling intermediates. Each of these phosphorylated proteins serve as docking proteins for other signaling proteins that contain Src-homology-2 domains (SH2 domain) that specifically recognize different phosphotyrosine residues, including the p85 regulatory subunit of PI3K and SHP2. Phosphorylation of IRSs proteins lead to the activation of two main signaling pathways: the PI3K-AKT/PKB pathway, which is responsible for most of the metabolic actions of insulin, and the Ras-MAPK pathway, which regulates expression of some genes and cooperates with the PI3K pathway to control cell growth and differentiation. Binding of the SH2 domains of PI3K to phosphotyrosines on IRS1 leads to the activation of PI3K and the generation of phosphatidylinositol-(3, 4, 5)-triphosphate (PIP3), a lipid second messenger, which activates several PIP3-dependent serine/threonine kinases, such as PDPK1 and subsequently AKT/PKB. The net effect of this pathway is to produce a translocation of the glucose transporter SLC2A4/GLUT4 from cytoplasmic vesicles to the cell membrane to facilitate glucose transport. Moreover, upon insulin stimulation, activated AKT/PKB is responsible for: anti-apoptotic effect of insulin by inducing phosphorylation of BAD; regulates the expression of gluconeogenic and lipogenic enzymes by controlling the activity of the winged helix or forkhead (FOX) class of transcription factors. Another pathway regulated by PI3K-AKT/PKB activation is mTORC1 signaling pathway which regulates cell growth and metabolism and integrates signals from insulin. AKT mediates insulin-stimulated protein synthesis by phosphorylating TSC2 thereby activating mTORC1 pathway. The Ras/RAF/MAP2K/MAPK pathway is mainly involved in mediating cell growth, survival and cellular differentiation of insulin. Phosphorylated IRS1 recruits GRB2/SOS complex, which triggers the activation of the Ras/RAF/MAP2K/MAPK pathway. In addition to binding insulin, the insulin receptor can bind insulin-like growth factors (IGFI and IGFII). When present in a hybrid receptor with IGF1R, binds IGF1. In adipocytes, inhibits lipolysis. The sequence is that of Insulin receptor (INSR) from Macaca mulatta (Rhesus macaque).